Here is a 376-residue protein sequence, read N- to C-terminus: DNA replication and repair protein RecF (376 aa).

30-37 contributes to the ATP binding site; the sequence is GNNAQGKS.

It belongs to the RecF family.

It is found in the cytoplasm. Its function is as follows. The RecF protein is involved in DNA metabolism; it is required for DNA replication and normal SOS inducibility. RecF binds preferentially to single-stranded, linear DNA. It also seems to bind ATP. This Nostoc sp. (strain PCC 7120 / SAG 25.82 / UTEX 2576) protein is DNA replication and repair protein RecF.